The sequence spans 401 residues: Inactive leucine-rich repeat receptor-like protein kinase CORYNE (401 aa).

Residues 1 to 33 (MKQRRRRNGCSSSNTISLLLLFFLVFFSRTSTS) form the signal peptide. Topologically, residues 34-62 (TSCRRRTVKHLSTTSTSSTPLESRITSKV) are extracellular. A helical membrane pass occupies residues 63-83 (IVISIVSGILTGLVSALVLAF). Topologically, residues 84–401 (LVRSIVKFMK…VHMLTQLHSF (318 aa)) are cytoplasmic. Residues 118–401 (SNGIQLLGSD…VHMLTQLHSF (284 aa)) enclose the Protein kinase domain. Residues 124-132 (LGSDLNGKY) and K146 contribute to the ATP site.

This sequence belongs to the protein kinase superfamily. Ser/Thr protein kinase family. In terms of assembly, self-interacts. Parts of a tetrameric complex made of two CLV2/CRN heterodimers that can interact with CLV3 and CLE peptides. CLV2/CRN heterodimer interacts with CLV1 homodimers. Interacts with CLV1 and CLV2. CLV2/CRN heterodimer can interact with BAM3. As to expression, present in roots, stems, leaves, inflorescence, flowers and siliques. Mostly expressed in shoot tips and, to a lesser extent, in young organs and roots. Also expressed in the inner tissues of the proximal root meristem. Expressed in the vascular cylinder of root tips, mostly in phloem poles.

It is found in the cell membrane. The protein resides in the endoplasmic reticulum membrane. Its function is as follows. Involved in the perception of CLV3 and CLV3-like (CLE) peptides, that act as extracellular signals regulating meristem maintenance. Modulates root, shoot and flower apical meristem maintenance and floral organ development regulation, probably via CLAVATA (CLV)-like pathways involving at least CLV3 and CLE19. In complex with CLV2, perceives secreted CLV3-like effector proteins from plant-parasitic cyst nematodes as ligand mimics of the plant CLE signaling pathway. This recognition is required for proper feeding structure (syncytium) development and ultimately successful nematode infection. CLE14 perception by CLV2/CRN complex triggers root meristem differentiation. Required for the sensing of the root CLE peptides (e.g. CLE8, CLE9/CLE10, CLE11, CLE13, CLE14, CLE16, CLE17, CLE18, CLE20, CLE21, CLE25, CLE26, CLE40, CLE41/CLE44 and CLE45), which also involves CLV2 and leads to root growth regulation, mostly in the phloem and protophloem. Promotes the accumulation of BAM3, especially at later stages of protophloem development. The protein is Inactive leucine-rich repeat receptor-like protein kinase CORYNE of Arabidopsis thaliana (Mouse-ear cress).